The sequence spans 314 residues: Transcription factor DICHOTOMA (314 aa).

Residues 87–145 (KKDRHSKINRPQGPRDRRVRLSIGIARKFFDLQEMLGFDKPSKTLDWLLTKSKEAIKEL) form the TCP domain. The region spanning 201-218 (KESRAKARARARERTKEK) is the R domain.

The protein localises to the nucleus. Functionally, transcription regulator involved in the dorsovental asymmetry of flowers. Promotes dorsal identity. This chain is Transcription factor DICHOTOMA (DICH), found in Antirrhinum majus (Garden snapdragon).